The following is a 162-amino-acid chain: EF-hand calcium-binding domain-containing protein 11 (162 aa).

EF-hand domains lie at 18–53 (SERR…LFGY), 91–126 (LYRN…VAPK), and 127–162 (LPAR…GQSK). 5 residues coordinate Ca(2+): D140, D142, D144, H146, and D151.

In Mus musculus (Mouse), this protein is EF-hand calcium-binding domain-containing protein 11 (Efcab11).